Consider the following 101-residue polypeptide: Urease subunit beta (101 aa).

The protein belongs to the urease beta subunit family. In terms of assembly, heterotrimer of UreA (gamma), UreB (beta) and UreC (alpha) subunits. Three heterotrimers associate to form the active enzyme.

Its subcellular location is the cytoplasm. The enzyme catalyses urea + 2 H2O + H(+) = hydrogencarbonate + 2 NH4(+). The protein operates within nitrogen metabolism; urea degradation; CO(2) and NH(3) from urea (urease route): step 1/1. The polypeptide is Urease subunit beta (Hahella chejuensis (strain KCTC 2396)).